Here is a 285-residue protein sequence, read N- to C-terminus: Acetyl-coenzyme A carboxylase carboxyl transferase subunit beta (285 aa).

One can recognise a CoA carboxyltransferase N-terminal domain in the interval 29 to 285; it reads IMTKCPKCKK…ILKIHQEVTK (257 aa). 4 residues coordinate Zn(2+): Cys-33, Cys-36, Cys-52, and Cys-55. Residues 33–55 form a C4-type zinc finger; it reads CPKCKKIMYTKELAENLNVCFNC.

Belongs to the AccD/PCCB family. In terms of assembly, acetyl-CoA carboxylase is a heterohexamer composed of biotin carboxyl carrier protein (AccB), biotin carboxylase (AccC) and two subunits each of ACCase subunit alpha (AccA) and ACCase subunit beta (AccD). Zn(2+) is required as a cofactor.

The protein resides in the cytoplasm. It carries out the reaction N(6)-carboxybiotinyl-L-lysyl-[protein] + acetyl-CoA = N(6)-biotinyl-L-lysyl-[protein] + malonyl-CoA. It participates in lipid metabolism; malonyl-CoA biosynthesis; malonyl-CoA from acetyl-CoA: step 1/1. In terms of biological role, component of the acetyl coenzyme A carboxylase (ACC) complex. Biotin carboxylase (BC) catalyzes the carboxylation of biotin on its carrier protein (BCCP) and then the CO(2) group is transferred by the transcarboxylase to acetyl-CoA to form malonyl-CoA. The polypeptide is Acetyl-coenzyme A carboxylase carboxyl transferase subunit beta (Staphylococcus aureus (strain Newman)).